A 163-amino-acid polypeptide reads, in one-letter code: Ribosome maturation factor RimM (163 aa).

In terms of domain architecture, PRC barrel spans 92–162 (EDEFYVADLV…AGRAVVRPPE (71 aa)).

The protein belongs to the RimM family. In terms of assembly, binds ribosomal protein uS19.

The protein resides in the cytoplasm. In terms of biological role, an accessory protein needed during the final step in the assembly of 30S ribosomal subunit, possibly for assembly of the head region. Essential for efficient processing of 16S rRNA. May be needed both before and after RbfA during the maturation of 16S rRNA. It has affinity for free ribosomal 30S subunits but not for 70S ribosomes. The polypeptide is Ribosome maturation factor RimM (Rubrobacter xylanophilus (strain DSM 9941 / JCM 11954 / NBRC 16129 / PRD-1)).